A 236-amino-acid polypeptide reads, in one-letter code: Purine nucleoside phosphorylase (236 aa).

Position 5 (histidine 5) interacts with a purine D-ribonucleoside. Residues glycine 21, arginine 25, arginine 43, and 86–89 (RYGT) contribute to the phosphate site. Residues glutamate 163, 180–182 (EME), and 204–205 (SD) each bind a purine D-ribonucleoside.

The protein belongs to the PNP/UDP phosphorylase family. In terms of assembly, homohexamer; disulfide-linked. Trimer of homodimers, with three symmetric intersubunit disulfide bonds linking the dimers to one another.

It carries out the reaction S-methyl-5'-thioadenosine + phosphate = 5-(methylsulfanyl)-alpha-D-ribose 1-phosphate + adenine. It catalyses the reaction a purine D-ribonucleoside + phosphate = a purine nucleobase + alpha-D-ribose 1-phosphate. The enzyme catalyses a purine 2'-deoxy-D-ribonucleoside + phosphate = a purine nucleobase + 2-deoxy-alpha-D-ribose 1-phosphate. Its pathway is purine metabolism; purine nucleoside salvage. Cleavage of guanosine or inosine to respective bases and sugar-1-phosphate molecules. Cleaves inosine, guanosine, and adenosine with a better efficiency than MTA. The chain is Purine nucleoside phosphorylase from Saccharolobus solfataricus (strain ATCC 35092 / DSM 1617 / JCM 11322 / P2) (Sulfolobus solfataricus).